A 268-amino-acid polypeptide reads, in one-letter code: Tryptophan synthase alpha chain (268 aa).

Residues E49 and D60 each act as proton acceptor in the active site.

The protein belongs to the TrpA family. As to quaternary structure, tetramer of two alpha and two beta chains.

It carries out the reaction (1S,2R)-1-C-(indol-3-yl)glycerol 3-phosphate + L-serine = D-glyceraldehyde 3-phosphate + L-tryptophan + H2O. It participates in amino-acid biosynthesis; L-tryptophan biosynthesis; L-tryptophan from chorismate: step 5/5. The alpha subunit is responsible for the aldol cleavage of indoleglycerol phosphate to indole and glyceraldehyde 3-phosphate. In Pseudomonas paraeruginosa (strain DSM 24068 / PA7) (Pseudomonas aeruginosa (strain PA7)), this protein is Tryptophan synthase alpha chain.